The chain runs to 645 residues: 1,4-alpha-glucan branching enzyme GlgB (645 aa).

D309 serves as the catalytic Nucleophile. Catalysis depends on E352, which acts as the Proton donor. The disordered stretch occupies residues V619–R645. Positions R636–R645 are enriched in polar residues.

The protein belongs to the glycosyl hydrolase 13 family. GlgB subfamily. As to quaternary structure, monomer.

The catalysed reaction is Transfers a segment of a (1-&gt;4)-alpha-D-glucan chain to a primary hydroxy group in a similar glucan chain.. It functions in the pathway glycan biosynthesis; glycogen biosynthesis. Functionally, catalyzes the formation of the alpha-1,6-glucosidic linkages in glycogen by scission of a 1,4-alpha-linked oligosaccharide from growing alpha-1,4-glucan chains and the subsequent attachment of the oligosaccharide to the alpha-1,6 position. The polypeptide is 1,4-alpha-glucan branching enzyme GlgB (Bacillus cereus (strain AH187)).